The following is a 754-amino-acid chain: 5-methyltetrahydropteroyltriglutamate--homocysteine methyltransferase (754 aa).

5-methyltetrahydropteroyltri-L-glutamate is bound by residues 17–20 (RELK) and lysine 117. L-homocysteine is bound by residues 431-433 (IGS) and glutamate 484. Residues 431 to 433 (IGS) and glutamate 484 contribute to the L-methionine site. Residues 515 to 516 (RC) and tryptophan 561 contribute to the 5-methyltetrahydropteroyltri-L-glutamate site. Aspartate 599 provides a ligand contact to L-homocysteine. Residue aspartate 599 participates in L-methionine binding. Glutamate 605 contributes to the 5-methyltetrahydropteroyltri-L-glutamate binding site. Zn(2+) is bound by residues histidine 641, cysteine 643, and glutamate 665. Histidine 694 functions as the Proton donor in the catalytic mechanism. Zn(2+) is bound at residue cysteine 726.

This sequence belongs to the vitamin-B12 independent methionine synthase family. Zn(2+) serves as cofactor.

It catalyses the reaction 5-methyltetrahydropteroyltri-L-glutamate + L-homocysteine = tetrahydropteroyltri-L-glutamate + L-methionine. Its pathway is amino-acid biosynthesis; L-methionine biosynthesis via de novo pathway; L-methionine from L-homocysteine (MetE route): step 1/1. In terms of biological role, catalyzes the transfer of a methyl group from 5-methyltetrahydrofolate to homocysteine resulting in methionine formation. This is 5-methyltetrahydropteroyltriglutamate--homocysteine methyltransferase from Klebsiella pneumoniae subsp. pneumoniae (strain ATCC 700721 / MGH 78578).